Here is a 335-residue protein sequence, read N- to C-terminus: Probable deoxyhypusine synthase (335 aa).

Lysine 307 functions as the Nucleophile in the catalytic mechanism.

It belongs to the deoxyhypusine synthase family. Requires NAD(+) as cofactor.

The enzyme catalyses [eIF5A protein]-L-lysine + spermidine = [eIF5A protein]-deoxyhypusine + propane-1,3-diamine. It participates in protein modification; eIF5A hypusination. In terms of biological role, catalyzes the NAD-dependent oxidative cleavage of spermidine and the subsequent transfer of the butylamine moiety of spermidine to the epsilon-amino group of a specific lysine residue of the eIF-5A precursor protein to form the intermediate deoxyhypusine residue. The chain is Probable deoxyhypusine synthase (dys) from Pyrococcus abyssi (strain GE5 / Orsay).